Consider the following 272-residue polypeptide: Phosphate import ATP-binding protein PstB 1 (272 aa).

One can recognise an ABC transporter domain in the interval 26 to 267; it reads ITIENLDLHY…PMKKQTEDYI (242 aa). 58 to 65 is a binding site for ATP; sequence GPSGCGKS.

It belongs to the ABC transporter superfamily. Phosphate importer (TC 3.A.1.7) family. The complex is composed of two ATP-binding proteins (PstB), two transmembrane proteins (PstC and PstA) and a solute-binding protein (PstS).

The protein resides in the cell inner membrane. It carries out the reaction phosphate(out) + ATP + H2O = ADP + 2 phosphate(in) + H(+). Part of the ABC transporter complex PstSACB involved in phosphate import. Responsible for energy coupling to the transport system. In Vibrio vulnificus (strain YJ016), this protein is Phosphate import ATP-binding protein PstB 1.